The following is a 522-amino-acid chain: MIKQIFGKLPRKPSKSSHNDSNPNGEGGVNSYYIPNSGISSISKPSSKSSASNSNGANGTVIAPSSTSSNRTNQVNGVYEALPSFRDVPTSEKPNLFIKKLSMCCVVFDFNDPSKNLREKEIKRQTLLELVDYIATVSTKLSDAAMQEIAKVAVVNLFRTFPSANHESKILETLDVDDEEPALEPAWPHLQVVYELLLRFVASPMTDAKLAKRYIDHSFVLKLLDLFDSEDQREREYLKTILHRIYGKFMVHRPFIRKAINNIFYRFIFETEKHNGIAELLEILGSIINGFALPLKEEHKLFLIRALIPLHRPKCASAYHQQLSYCIVQFVEKDFKLADTVIRGLLKYWPVTNSSKEVMFLGELEEVLEATQAAEFQRCMVPLFRQIARCLNSSHFQVAERALFLWNNDHIRNLITQNHKVIMPIVFPAMERNTRGHWNQAVQSLTLNVRKVMAETDQILFDECLAKFQEDEANETEVVAKREATWKLLEELAASKSVSNEAVLVPRFSSSVTLATGKTSGS.

The disordered stretch occupies residues M1–Q74. Residues P35 to N58 are compositionally biased toward low complexity. A compositionally biased stretch (polar residues) spans A63–Q74.

Belongs to the phosphatase 2A regulatory subunit B56 family. In terms of assembly, PP2A consists of a common heteromeric enzyme, composed of a catalytic subunit (subunits C), a constant regulatory subunit (subunit A), and a variety of regulatory subunits such as subunits B (the R2/B/PR55/B55, R3/B''/PR72/PR130/PR59 and R5/B'/B56 families). Interacts with BRI1. Interacts with IGMT1 and IGMT4. Interacts with ACO3 in the cytosol. Expressed ubiquitously at low levels. Expressed in roots, emerging lateral roots, cotyledons, leaves, floral stalks and flowers.

Its subcellular location is the cytoplasm. The protein localises to the cytosol. It is found in the nucleus. In terms of biological role, the B regulatory subunit may modulate substrate selectivity and catalytic activity, and may also direct the localization of the catalytic enzyme to a particular subcellular compartment. Required for the formation of the PP2A holoenzyme that negatively regulates brassinosteroid signaling by dephosphorylating and inactivating BRI1 in the cytoplasm. Seems to be functionally connected with CPR5 and may mediate the negative regulation of defense reactions and senescence under low irradiances. May contribute to the epigenetic regulation of defense gene expression. Involved in the control of methoxylation of indole glucosinolates and formation of 4-methoxy- indol-3-yl-methyl glucosinolate in leaves, through direct interaction with indole glucosinolate methyltransferases. Involved in growth regulation and stress signaling. Involved in the regulation of reactive oxygen species (ROS) signaling and maintenance of cellular ROS homeostasis. Required to control the level of ACO3 phosphorylation in the cytoplasm. Regulates hydrogen peroxide metabolism by controlling the abundance of AOX1A and AXO3/AOX1D in leaf mitochondria. May mediate dephosphorylation of CRT1 and promote the degradation of unfolded proteins in endoplasmic reticulum (ER). Involved in the regulation of flowering time by repressing FLC, the main flowering repressor gene. The chain is Serine/threonine protein phosphatase 2A 59 kDa regulatory subunit B' gamma isoform (B'GAMMA) from Arabidopsis thaliana (Mouse-ear cress).